The primary structure comprises 517 residues: MIPDISEALSWLEKHPLAVKGIQRGIERETLRVTANGDLATTGHPEILGSALAHPWITTDFAEALLEFITPVDKDVDHLLTFLRDIHRHVSRNLGDERMWPLSMPCFIDSEQNIELAQYGSSNVGRFKTLYREGLKNRYGALMQTISGVHYNFSLPLSFWQAREGVADAESGKKAISAGYFRLIRNYYRFGWVIPYLFGASPAICSSFLRGRETALPFEHTEKGMLYLPYATSLRLSDLGYTNKSQSNLGITFNDLDTYVAALKRAIKTPSEEYAQVGVKKEGRYLQLNTNVLQIENELYAPIRPKRVTRAGETPSDALLRGGIEYIEVRSLDINPFSPTGVSESQVRFLDLFLIWCALADAPEMSADELLCTRKNWNRVILEGRKPGQTVGMRCETIQQPIAEVGKSLFADLRRVAEVLDAENDQPHYQQVCDELLVGFDDPETTFSGRLLTLMKQEGNGSVGLNLAEEYRQMLSGEPLQVLTEEQLVAEGERSWQRQRQIESEDTMGFDDYLATQ.

This sequence belongs to the glutamate--cysteine ligase type 1 family. Type 1 subfamily.

It catalyses the reaction L-cysteine + L-glutamate + ATP = gamma-L-glutamyl-L-cysteine + ADP + phosphate + H(+). Its pathway is sulfur metabolism; glutathione biosynthesis; glutathione from L-cysteine and L-glutamate: step 1/2. This Pectobacterium atrosepticum (strain SCRI 1043 / ATCC BAA-672) (Erwinia carotovora subsp. atroseptica) protein is Glutamate--cysteine ligase.